The chain runs to 323 residues: 4-hydroxy-3-methylbut-2-enyl diphosphate reductase (323 aa).

Cys21 is a [4Fe-4S] cluster binding site. (2E)-4-hydroxy-3-methylbut-2-enyl diphosphate-binding residues include His50 and His83. Dimethylallyl diphosphate-binding residues include His50 and His83. Positions 50 and 83 each coordinate isopentenyl diphosphate. Cys105 provides a ligand contact to [4Fe-4S] cluster. His133 is a binding site for (2E)-4-hydroxy-3-methylbut-2-enyl diphosphate. His133 lines the dimethylallyl diphosphate pocket. His133 contributes to the isopentenyl diphosphate binding site. Glu135 acts as the Proton donor in catalysis. Thr173 lines the (2E)-4-hydroxy-3-methylbut-2-enyl diphosphate pocket. [4Fe-4S] cluster is bound at residue Cys203. Residues Ser231, Ser232, Asn233, and Ser276 each contribute to the (2E)-4-hydroxy-3-methylbut-2-enyl diphosphate site. Dimethylallyl diphosphate is bound by residues Ser231, Ser232, Asn233, and Ser276. Positions 231, 232, 233, and 276 each coordinate isopentenyl diphosphate.

Belongs to the IspH family. Requires [4Fe-4S] cluster as cofactor.

It catalyses the reaction isopentenyl diphosphate + 2 oxidized [2Fe-2S]-[ferredoxin] + H2O = (2E)-4-hydroxy-3-methylbut-2-enyl diphosphate + 2 reduced [2Fe-2S]-[ferredoxin] + 2 H(+). The catalysed reaction is dimethylallyl diphosphate + 2 oxidized [2Fe-2S]-[ferredoxin] + H2O = (2E)-4-hydroxy-3-methylbut-2-enyl diphosphate + 2 reduced [2Fe-2S]-[ferredoxin] + 2 H(+). It functions in the pathway isoprenoid biosynthesis; dimethylallyl diphosphate biosynthesis; dimethylallyl diphosphate from (2E)-4-hydroxy-3-methylbutenyl diphosphate: step 1/1. Its pathway is isoprenoid biosynthesis; isopentenyl diphosphate biosynthesis via DXP pathway; isopentenyl diphosphate from 1-deoxy-D-xylulose 5-phosphate: step 6/6. In terms of biological role, catalyzes the conversion of 1-hydroxy-2-methyl-2-(E)-butenyl 4-diphosphate (HMBPP) into a mixture of isopentenyl diphosphate (IPP) and dimethylallyl diphosphate (DMAPP). Acts in the terminal step of the DOXP/MEP pathway for isoprenoid precursor biosynthesis. The protein is 4-hydroxy-3-methylbut-2-enyl diphosphate reductase of Cutibacterium acnes (strain DSM 16379 / KPA171202) (Propionibacterium acnes).